A 513-amino-acid chain; its full sequence is Fumarate reductase (513 aa).

41–55 (AIVIGGGLAGLSATN) serves as a coordination point for FAD. A Phosphoserine modification is found at Ser-100. Active-site residues include His-288 and Arg-311.

Belongs to the FAD-dependent oxidoreductase 2 family. FRD/SDH subfamily. FAD serves as cofactor.

The protein resides in the cytoplasm. Its subcellular location is the mitochondrion. The protein localises to the nucleus. The catalysed reaction is succinate + NAD(+) = fumarate + NADH + H(+). In terms of biological role, irreversibly catalyzes the reduction of fumarate to succinate. This chain is Fumarate reductase (osm1), found in Schizosaccharomyces pombe (strain 972 / ATCC 24843) (Fission yeast).